Reading from the N-terminus, the 211-residue chain is Uridine kinase (211 aa).

13 to 20 is a binding site for ATP; sequence GASASGKS.

It belongs to the uridine kinase family.

Its subcellular location is the cytoplasm. It catalyses the reaction uridine + ATP = UMP + ADP + H(+). It carries out the reaction cytidine + ATP = CMP + ADP + H(+). Its pathway is pyrimidine metabolism; CTP biosynthesis via salvage pathway; CTP from cytidine: step 1/3. It functions in the pathway pyrimidine metabolism; UMP biosynthesis via salvage pathway; UMP from uridine: step 1/1. The chain is Uridine kinase from Shewanella pealeana (strain ATCC 700345 / ANG-SQ1).